The sequence spans 357 residues: UDP-N-acetylglucosamine--N-acetylmuramyl-(pentapeptide) pyrophosphoryl-undecaprenol N-acetylglucosamine transferase (357 aa).

Residues T13–G15, N125, R161, S189, I243, and Q288 contribute to the UDP-N-acetyl-alpha-D-glucosamine site.

The protein belongs to the glycosyltransferase 28 family. MurG subfamily.

It localises to the cell inner membrane. The catalysed reaction is di-trans,octa-cis-undecaprenyl diphospho-N-acetyl-alpha-D-muramoyl-L-alanyl-D-glutamyl-meso-2,6-diaminopimeloyl-D-alanyl-D-alanine + UDP-N-acetyl-alpha-D-glucosamine = di-trans,octa-cis-undecaprenyl diphospho-[N-acetyl-alpha-D-glucosaminyl-(1-&gt;4)]-N-acetyl-alpha-D-muramoyl-L-alanyl-D-glutamyl-meso-2,6-diaminopimeloyl-D-alanyl-D-alanine + UDP + H(+). It participates in cell wall biogenesis; peptidoglycan biosynthesis. Its function is as follows. Cell wall formation. Catalyzes the transfer of a GlcNAc subunit on undecaprenyl-pyrophosphoryl-MurNAc-pentapeptide (lipid intermediate I) to form undecaprenyl-pyrophosphoryl-MurNAc-(pentapeptide)GlcNAc (lipid intermediate II). This is UDP-N-acetylglucosamine--N-acetylmuramyl-(pentapeptide) pyrophosphoryl-undecaprenol N-acetylglucosamine transferase from Bordetella petrii (strain ATCC BAA-461 / DSM 12804 / CCUG 43448).